The sequence spans 683 residues: Glycine--tRNA ligase beta subunit (683 aa).

This sequence belongs to the class-II aminoacyl-tRNA synthetase family. Tetramer of two alpha and two beta subunits.

Its subcellular location is the cytoplasm. The catalysed reaction is tRNA(Gly) + glycine + ATP = glycyl-tRNA(Gly) + AMP + diphosphate. This chain is Glycine--tRNA ligase beta subunit, found in Pseudomonas putida (strain W619).